Reading from the N-terminus, the 1047-residue chain is Ubiquitin carboxyl-terminal hydrolase 28 (1047 aa).

Disordered regions lie at residues 60 to 95 (DQEP…DPEK) and 110 to 138 (SPKA…RCEV). The UIM domain maps to 94–113 (EKKGDVHSAVAYGQLESPKA). The span at 111-128 (PKAHAAERPQEVHSPEHK) shows a compositional bias: basic and acidic residues. Residues 156–651 (VGMKNIGNTC…SAYCLMYISD (496 aa)) form the USP domain. C165 acts as the Nucleophile in catalysis. Over residues 461–486 (STEDSQMMDRQSQGESLILGTPSQPD) the composition is skewed to polar residues. Residues 461-528 (STEDSQMMDR…SEPPAEMSDC (68 aa)) are disordered. Residues 489 to 498 (LDGKDGKPED) show a composition bias toward basic and acidic residues. Residues 504–516 (ANSSPQQQLNAPL) show a composition bias toward polar residues. H601 acts as the Proton acceptor in catalysis. The tract at residues 694-735 (EAEEWEEEQSCKIPSTASESQELSPESGLDPPAAHEQSLRSL) is disordered. Residues 705–717 (KIPSTASESQELS) show a composition bias toward polar residues.

Belongs to the peptidase C19 family. USP28 subfamily.

The protein resides in the nucleus. The protein localises to the nucleoplasm. It catalyses the reaction Thiol-dependent hydrolysis of ester, thioester, amide, peptide and isopeptide bonds formed by the C-terminal Gly of ubiquitin (a 76-residue protein attached to proteins as an intracellular targeting signal).. Functionally, deubiquitinase involved in DNA damage response checkpoint and MYC proto-oncogene stability. Involved in DNA damage induced apoptosis by specifically deubiquitinating proteins of the DNA damage pathway such as CLSPN. Also involved in G2 DNA damage checkpoint, by deubiquitinating CLSPN, and preventing its degradation by the anaphase promoting complex/cyclosome (APC/C). Specifically deubiquitinates MYC in the nucleoplasm, leading to prevent MYC degradation by the proteasome. Deubiquitinates ZNF304, hence may prevent ZNF304 degradation by the proteasome, leading to the activated KRAS-mediated promoter hypermethylation and transcriptional silencing of tumor suppressor genes (TSGs). The protein is Ubiquitin carboxyl-terminal hydrolase 28 (USP28) of Gallus gallus (Chicken).